The sequence spans 502 residues: Putative F-box/FBD/LRR-repeat protein At5g22610 (502 aa).

Residues 17-63 (EDLISKLPEVLLSQILSYLPTKDIVRTSVLSKRWKSVWLLIPGLDLD) enclose the F-box domain. LRR repeat units lie at residues 70-98 (YDTF…KLSI), 99-127 (QKNE…DVEF), 147-180 (CKTL…CLEE), 181-206 (NVYS…TIVK), 208-228 (DDNV…SVGY), 238-263 (YYYD…TFNN), and 344-373 (SVWL…VLET). Residues 384–435 (VERRVSSVPECLLSSLEFVEIKNRISVDDGALEVARYFVENSVNLQKVVLRL) form the FBD domain.

The polypeptide is Putative F-box/FBD/LRR-repeat protein At5g22610 (Arabidopsis thaliana (Mouse-ear cress)).